A 197-amino-acid polypeptide reads, in one-letter code: Caspase recruitment domain-containing protein 16 (197 aa).

A CARD domain is found at 1–91 (MADKVLKEKR…YLAETLGLSA (91 aa)).

As to quaternary structure, homooligomer. Interacts with CASP1, CASP4, CARD8 and RIPK2. Widely expressed. Expressed at higher level in placenta, spleen, lymph node and bone marrow. Weakly or not expressed in thymus.

Caspase inhibitor. Acts as a regulator of procaspase-1/CASP1 activation implicated in the regulation of the proteolytic maturation of pro-interleukin-1 beta (IL1B) and its release during inflammation. Inhibits the release of IL1B in response to LPS in monocytes. Also induces NF-kappa-B activation during the pro-inflammatory cytokine response. Also able to inhibit CASP1-mediated neuronal cell death, TNF-alpha, hypoxia-, UV-, and staurosporine-mediated cell death but not ER stress-mediated cell death. Acts by preventing activation of caspases CASP1 and CASP4, possibly by preventing the interaction between CASP1 and RIPK2. The sequence is that of Caspase recruitment domain-containing protein 16 (CARD16) from Homo sapiens (Human).